Here is a 175-residue protein sequence, read N- to C-terminus: Ribulose bisphosphate carboxylase small subunit, chloroplastic (175 aa).

The N-terminal 46 residues, 1 to 46 (MAPSVMASSATTVAPFQGLKSTAGMPVARRSGNSSFGNVSNGGRIR), are a transit peptide targeting the chloroplast. An interaction with large subunit region spans residues 60–64 (ETLSY).

The protein belongs to the RuBisCO small chain family. Heterohexadecamer of 8 large and 8 small subunits.

Its subcellular location is the plastid. The protein resides in the chloroplast. RuBisCO catalyzes two reactions: the carboxylation of D-ribulose 1,5-bisphosphate, the primary event in carbon dioxide fixation, as well as the oxidative fragmentation of the pentose substrate. Both reactions occur simultaneously and in competition at the same active site. Although the small subunit is not catalytic it is essential for maximal activity. The sequence is that of Ribulose bisphosphate carboxylase small subunit, chloroplastic from Oryza sativa subsp. indica (Rice).